We begin with the raw amino-acid sequence, 89 residues long: Small ribosomal subunit protein uS14A (89 aa).

This sequence belongs to the universal ribosomal protein uS14 family. In terms of assembly, part of the 30S ribosomal subunit. Contacts proteins S3 and S10.

In terms of biological role, binds 16S rRNA, required for the assembly of 30S particles and may also be responsible for determining the conformation of the 16S rRNA at the A site. This chain is Small ribosomal subunit protein uS14A, found in Staphylococcus aureus (strain MRSA252).